The primary structure comprises 211 residues: Putative 3-methyladenine DNA glycosylase (211 aa).

It belongs to the DNA glycosylase MPG family.

The polypeptide is Putative 3-methyladenine DNA glycosylase (Granulibacter bethesdensis (strain ATCC BAA-1260 / CGDNIH1)).